The following is a 439-amino-acid chain: Ornithine aminotransferase, mitochondrial (439 aa).

The transit peptide at 1 to 25 (MLSKLASLQTIAALRRGVHTSVASA) directs the protein to the mitochondrion. An N6-acetyllysine mark is found at Lys49 and Lys66. Lys102 is subject to N6-succinyllysine. Lys107 is modified (N6-acetyllysine; alternate). Lys107 bears the N6-succinyllysine; alternate mark. Lys292 is modified (N6-(pyridoxal phosphate)lysine). At Lys362 the chain carries N6-acetyllysine; alternate. N6-succinyllysine; alternate is present on Lys362. An N6-acetyllysine mark is found at Lys386 and Lys392. At Lys405 the chain carries N6-acetyllysine; alternate. Lys405 is subject to N6-succinyllysine; alternate. The residue at position 421 (Lys421) is an N6-acetyllysine.

The protein belongs to the class-III pyridoxal-phosphate-dependent aminotransferase family. As to quaternary structure, homohexamer. It depends on pyridoxal 5'-phosphate as a cofactor.

Its subcellular location is the mitochondrion matrix. The enzyme catalyses L-ornithine + 2-oxoglutarate = L-glutamate 5-semialdehyde + L-glutamate. The protein operates within amino-acid biosynthesis; L-proline biosynthesis; L-glutamate 5-semialdehyde from L-ornithine: step 1/1. Functionally, catalyzes the reversible interconversion of L-ornithine and 2-oxoglutarate to L-glutamate semialdehyde and L-glutamate. This chain is Ornithine aminotransferase, mitochondrial (Oat), found in Mus musculus (Mouse).